Consider the following 204-residue polypeptide: Rho GDP-dissociation inhibitor 1 (204 aa).

A disordered region spans residues Met-1 to Gln-36. Ala-2 is subject to N-acetylalanine. Phosphoserine is present on Ser-34. Lys-43 is subject to N6-acetyllysine. Ser-47 bears the Phosphoserine mark. N6-acetyllysine occurs at positions 105 and 127. Residues Lys-138 and Lys-141 each participate in a glycyl lysine isopeptide (Lys-Gly) (interchain with G-Cter in SUMO1); alternate cross-link. Residues Lys-138 and Lys-141 each participate in a glycyl lysine isopeptide (Lys-Gly) (interchain with G-Cter in SUMO2); alternate cross-link. Lys-141 carries the N6-acetyllysine; alternate modification. Lys-141 carries the post-translational modification N6-succinyllysine; alternate. Lys-178 carries the post-translational modification N6-acetyllysine.

This sequence belongs to the Rho GDI family. As to quaternary structure, monomer. Interacts with FER. Interacts with PLXNB3. Forms a heterodimer with RAC1. Interacts with RHOA, the affinity is increased by three orders of magnitude when RHOA is prenylated. Interacts with PSMD10; the interaction increases ARHGDIA association with RHOA, leading to ARHGDIA-mediated inactivation of RHOA and ROCK and prolonged AKT activation. Interacts with KANK2; the interaction is direct and may regulate the interaction of ARHGDIA with RHOA, RAC1 and CDC42. Interacts with RHOC. Interacts with CDC42. Interacts with NGFR (via death domain); NGFR binding decreases the affinity for RHOA. In kidney glomerulus, expressed in podocytes and mesangial cells.

The protein resides in the cytoplasm. Functionally, controls Rho proteins homeostasis. Regulates the GDP/GTP exchange reaction of the Rho proteins by inhibiting the dissociation of GDP from them, and the subsequent binding of GTP to them. Retains Rho proteins such as CDC42, RAC1 and RHOA in an inactive cytosolic pool, regulating their stability and protecting them from degradation. Actively involved in the recycling and distribution of activated Rho GTPases in the cell, mediates extraction from membranes of both inactive and activated molecules due its exceptionally high affinity for prenylated forms. Through the modulation of Rho proteins, may play a role in cell motility regulation. In glioma cells, inhibits cell migration and invasion by mediating the signals of SEMA5A and PLXNB3 that lead to inactivation of RAC1. The chain is Rho GDP-dissociation inhibitor 1 (Arhgdia) from Mus musculus (Mouse).